Reading from the N-terminus, the 536-residue chain is Metal transporter Nramp2 (536 aa).

Residues methionine 1 to glutamate 37 are disordered. The segment covering leucine 22–serine 36 has biased composition (low complexity). The N-linked (GlcNAc...) asparagine glycan is linked to asparagine 38. 12 consecutive transmembrane segments (helical) span residues leucine 76–leucine 96, alanine 104–isoleucine 124, valine 161–leucine 181, phenylalanine 185–leucine 205, leucine 213–glycine 233, alanine 259–valine 279, valine 305–phenylalanine 325, tyrosine 347–glutamine 367, serine 400–leucine 420, isoleucine 435–phenylalanine 455, alanine 465–isoleucine 485, and leucine 492–valine 512.

This sequence belongs to the NRAMP (TC 2.A.55) family.

The protein resides in the membrane. Functionally, probable divalent metal transporter. The protein is Metal transporter Nramp2 of Populus trichocarpa (Western balsam poplar).